We begin with the raw amino-acid sequence, 209 residues long: Ribonuclease HII (209 aa).

One can recognise an RNase H type-2 domain in the interval 25–209 (RRIAGIDEAG…ATFRGVREYL (185 aa)). The a divalent metal cation site is built by D31, E32, and D123.

Belongs to the RNase HII family. It depends on Mn(2+) as a cofactor. Mg(2+) is required as a cofactor.

It localises to the cytoplasm. The catalysed reaction is Endonucleolytic cleavage to 5'-phosphomonoester.. Functionally, endonuclease that specifically degrades the RNA of RNA-DNA hybrids. The sequence is that of Ribonuclease HII from Syntrophotalea carbinolica (strain DSM 2380 / NBRC 103641 / GraBd1) (Pelobacter carbinolicus).